The primary structure comprises 34 residues: TGPQTTCQASTCEAGCKQIGKSMKSCQGDTCECA.

3 cysteine pairs are disulfide-bonded: Cys-7/Cys-26, Cys-12/Cys-31, and Cys-16/Cys-33.

As to expression, expressed by the venom gland.

It is found in the secreted. Reversibly blocks Shaker B potassium channels. The protein is Potassium channel toxin alpha-KTx 18.2 of Tityus discrepans (Venezuelan scorpion).